The chain runs to 352 residues: MKKVVVGLSGGVDSSTAAAILHNQGYEVIGLTLWLMKGKGQCCSEGMIDAAYICEQLGIPHEVVDMRDVFQTHIVDYLVTGYGAGITPLPCSQCNKTVKFGPMVQYASEKLGCDRIATGHYARIRYDEATGRYQLLRAVDRNKDQSYFLYDLSQDLLAASLFPLGEMEKADTRRIATEHGLKTADKPESQDLCLVESNGSMRAFLDKYIAPKKGDIVDTAGKVLGQHDGVHHYTIGQRKGLGIAAPEPLYVVELDAVHNKVVVGDRTKATQEECTVNRVNWVSIAEPSTPIRAAVQIRYRSAPEPVTVIPLENSRVRLVFDEPQFSITPGQAAVWYDGNKVLGGGIIEQFSK.

Residues 7 to 14 (GLSGGVDS) and Leu-33 contribute to the ATP site. Catalysis depends on Cys-94, which acts as the Nucleophile. A disulfide bridge connects residues Cys-94 and Cys-193. Residue Gly-119 coordinates ATP. The interaction with tRNA stretch occupies residues 143–145 (KDQ). The Cysteine persulfide intermediate role is filled by Cys-193. An interaction with tRNA region spans residues 298-299 (RY).

Belongs to the MnmA/TRMU family.

It localises to the cytoplasm. It catalyses the reaction S-sulfanyl-L-cysteinyl-[protein] + uridine(34) in tRNA + AH2 + ATP = 2-thiouridine(34) in tRNA + L-cysteinyl-[protein] + A + AMP + diphosphate + H(+). Catalyzes the 2-thiolation of uridine at the wobble position (U34) of tRNA, leading to the formation of s(2)U34. In Nostoc sp. (strain PCC 7120 / SAG 25.82 / UTEX 2576), this protein is tRNA-specific 2-thiouridylase MnmA.